Consider the following 216-residue polypeptide: Flavin-dependent thymidylate synthase (216 aa).

Residues 9 to 206 (GFVELVDVMG…PWTYEAFIKY (198 aa)) enclose the ThyX domain. Residues serine 55, 78-80 (RHR), and glutamate 86 each bind FAD. DUMP-binding positions include 75 to 78 (QWFR), 86 to 90 (ELSGR), and arginine 145. The short motif at 78–88 (RHRIASYNELS) is the ThyX motif element. Residues 161 to 163 (NAR) and asparagine 167 contribute to the FAD site. Arginine 172 contributes to the dUMP binding site. Arginine 172 functions as the Involved in ionization of N3 of dUMP, leading to its activation in the catalytic mechanism.

It belongs to the thymidylate synthase ThyX family. In terms of assembly, homotetramer. The cofactor is FAD.

It carries out the reaction dUMP + (6R)-5,10-methylene-5,6,7,8-tetrahydrofolate + NADPH + H(+) = dTMP + (6S)-5,6,7,8-tetrahydrofolate + NADP(+). It participates in pyrimidine metabolism; dTTP biosynthesis. In terms of biological role, catalyzes the reductive methylation of 2'-deoxyuridine-5'-monophosphate (dUMP) to 2'-deoxythymidine-5'-monophosphate (dTMP) while utilizing 5,10-methylenetetrahydrofolate (mTHF) as the methyl donor, and NADPH and FADH(2) as the reductant. This is Flavin-dependent thymidylate synthase from Thermotoga neapolitana (strain ATCC 49049 / DSM 4359 / NBRC 107923 / NS-E).